A 287-amino-acid chain; its full sequence is Large ribosomal subunit protein uL2 (287 aa).

A disordered region spans residues 221–287; the sequence is RGSVMNPCDH…SKRSRGGRDS (67 aa). Residues 271-287 are compositionally biased toward basic residues; the sequence is LRKRRKTSKRSRGGRDS.

This sequence belongs to the universal ribosomal protein uL2 family. In terms of assembly, part of the 50S ribosomal subunit. Forms a bridge to the 30S subunit in the 70S ribosome.

Functionally, one of the primary rRNA binding proteins. Required for association of the 30S and 50S subunits to form the 70S ribosome, for tRNA binding and peptide bond formation. It has been suggested to have peptidyltransferase activity; this is somewhat controversial. Makes several contacts with the 16S rRNA in the 70S ribosome. This chain is Large ribosomal subunit protein uL2, found in Synechococcus sp. (strain CC9605).